A 508-amino-acid polypeptide reads, in one-letter code: Galactose-1-phosphate uridylyltransferase (508 aa).

This sequence belongs to the galactose-1-phosphate uridylyltransferase type 2 family.

It is found in the cytoplasm. It carries out the reaction alpha-D-galactose 1-phosphate + UDP-alpha-D-glucose = alpha-D-glucose 1-phosphate + UDP-alpha-D-galactose. Its pathway is carbohydrate metabolism; galactose metabolism. The protein is Galactose-1-phosphate uridylyltransferase (galT) of Halalkalibacterium halodurans (strain ATCC BAA-125 / DSM 18197 / FERM 7344 / JCM 9153 / C-125) (Bacillus halodurans).